Reading from the N-terminus, the 105-residue chain is BLOC-1-related complex subunit 7 (105 aa).

This sequence belongs to the BORCS7 family. Component of the BLOC-one-related complex (BORC) which is composed of BLOC1S1, BLOC1S2, BORCS5, BORCS6, BORCS7, BORCS8, KXD1 and SNAPIN.

The protein resides in the lysosome membrane. As part of the BORC complex may play a role in lysosomes movement and localization at the cell periphery. Associated with the cytosolic face of lysosomes, the BORC complex may recruit ARL8B and couple lysosomes to microtubule plus-end-directed kinesin motor. The sequence is that of BLOC-1-related complex subunit 7 from Bos taurus (Bovine).